A 169-amino-acid chain; its full sequence is Putative phosphoesterase SSP1770 (169 aa).

His-34 acts as the Proton donor in catalysis. Short sequence motifs (HXTX) lie at residues 34–37 (HITI) and 115–118 (HFTI). Residue His-115 is the Proton acceptor of the active site.

The protein belongs to the 2H phosphoesterase superfamily. YjcG family.

The protein is Putative phosphoesterase SSP1770 of Staphylococcus saprophyticus subsp. saprophyticus (strain ATCC 15305 / DSM 20229 / NCIMB 8711 / NCTC 7292 / S-41).